Here is a 184-residue protein sequence, read N- to C-terminus: Shikimate kinase (184 aa).

Residue 17–22 (GAGKTT) coordinates ATP. A Mg(2+)-binding site is contributed by Thr-21. Residues Asp-39, Arg-63, and Gly-85 each coordinate substrate. Arg-123 serves as a coordination point for ATP. Position 142 (Arg-142) interacts with substrate.

Belongs to the shikimate kinase family. Monomer. It depends on Mg(2+) as a cofactor.

It is found in the cytoplasm. It catalyses the reaction shikimate + ATP = 3-phosphoshikimate + ADP + H(+). The protein operates within metabolic intermediate biosynthesis; chorismate biosynthesis; chorismate from D-erythrose 4-phosphate and phosphoenolpyruvate: step 5/7. Functionally, catalyzes the specific phosphorylation of the 3-hydroxyl group of shikimic acid using ATP as a cosubstrate. This is Shikimate kinase from Burkholderia pseudomallei (strain 1710b).